The following is a 428-amino-acid chain: MGLNTAIATRVNGTPPPEVPIADIELGSLDFWALDDDVRDGAFATLRREAPISFWPTIELPGFVAGNGHWALTKYDDVFYASRHPDIFSSYPNITINDQTPELAEYFGSMIVLDDPRHQRLRSIVSRAFTPKVVARIEAAVRDRAHRLVSSMIANNPDRQADLVSELAGPLPLQIICDMMGIPKADHQRIFHWTNVILGFGDPDLATDFDEFMQVSADIGAYATALAEDRRVNHHDDLTSSLVEAEVDGERLSSREIASFFILLVVAGNETTRNAITHGVLALSRYPEQRDRWWSDFDGLAPTAVEEIVRWASPVVYMRRTLTQDIELRGTKMAAGDKVSLWYCSANRDESKFADPWTFDLARNPNPHLGFGGGGAHFCLGANLARREIRVAFDELRRQMPDVVATEEPARLLSQFIHGIKTLPVTWS.

A heme-binding site is contributed by C379.

It belongs to the cytochrome P450 family. It depends on heme as a cofactor.

The enzyme catalyses a methyl-branched lipid + O2 + 2 reduced ferredoxin [iron-sulfur] cluster + 2 H(+) = an omega-hydroxy-methyl-branched lipid + H2O + 2 oxidized ferredoxin [iron-sulfur] cluster.. It carries out the reaction cholest-4-en-3-one + 6 reduced [2Fe-2S]-[ferredoxin] + 3 O2 + 5 H(+) = (25R)-3-oxocholest-4-en-26-oate + 6 oxidized [2Fe-2S]-[ferredoxin] + 4 H2O. Its pathway is lipid metabolism; branched-chain fatty acid metabolism. Functionally, primarily hydroxylates the omega-carbon of a number of methyl-branched lipids, including (2E,6E)-farnesol, phytanate, geranylgeraniol, 15-methylpalmitate and (2E,6E)-farnesyl diphosphate. Also catalyzes the sequential oxidation of the terminal methyl of cholest-4-en-3-one into (25R)-26-hydroxycholest-4-en-3-one (alcohol), (25R)-26-oxocholest-4-en-3-one (aldehyde), to finally yield the carboxylic acid (25R)-3-oxocholest-4-en-26-oate. Also able to sequentially oxidize cholesterol itself, not only cholest-4-en-3-one. The chain is Methyl-branched lipid omega-hydroxylase (cyp124) from Mycobacterium bovis (strain ATCC BAA-935 / AF2122/97).